Reading from the N-terminus, the 187-residue chain is Elongation factor P (187 aa).

Belongs to the elongation factor P family.

Its subcellular location is the cytoplasm. The protein operates within protein biosynthesis; polypeptide chain elongation. Its function is as follows. Involved in peptide bond synthesis. Stimulates efficient translation and peptide-bond synthesis on native or reconstituted 70S ribosomes in vitro. Probably functions indirectly by altering the affinity of the ribosome for aminoacyl-tRNA, thus increasing their reactivity as acceptors for peptidyl transferase. The chain is Elongation factor P from Rhodococcus jostii (strain RHA1).